Reading from the N-terminus, the 313-residue chain is MLDNVLRIATRQSPLALWQAHYVKDKLMASHPGLVVELVPMVTRGDVILDTPLAKVGGKGLFVKELEVALLENRADIAVHSMKDVPVEFPQGLGLVTICEREDPRDAFVSNNYDSLDALPAGSIVGTSSLRRQCQLAERRPDLIIRSLRGNVGTRLSKLDNGEYDAIILAVAGLKRLGLESRIRAALPPEISLPAVGQGAVGIECRLDDTRTRELLAALNHHETALRVTAERAMNTRLEGGCQVPIGSYAELIDGEIWLRALVGAPDGSQIIRGERRGAPQDAEQMGISLAEELLNNGAREILAEVYNGDAPA.

S-(dipyrrolylmethanemethyl)cysteine is present on C242.

Belongs to the HMBS family. As to quaternary structure, monomer. It depends on dipyrromethane as a cofactor.

The catalysed reaction is 4 porphobilinogen + H2O = hydroxymethylbilane + 4 NH4(+). The protein operates within porphyrin-containing compound metabolism; protoporphyrin-IX biosynthesis; coproporphyrinogen-III from 5-aminolevulinate: step 2/4. In terms of biological role, tetrapolymerization of the monopyrrole PBG into the hydroxymethylbilane pre-uroporphyrinogen in several discrete steps. The polypeptide is Porphobilinogen deaminase (Escherichia coli O17:K52:H18 (strain UMN026 / ExPEC)).